Reading from the N-terminus, the 331-residue chain is Putative NAD(P)H nitroreductase acg (331 aa).

Residues 28-32 (QPWRW) and Arg-316 each bind FMN.

The protein belongs to the nitroreductase family. The cofactor is FMN.

This Mycobacterium tuberculosis (strain CDC 1551 / Oshkosh) protein is Putative NAD(P)H nitroreductase acg (acg).